A 245-amino-acid chain; its full sequence is Phycocyanobilin:ferredoxin oxidoreductase (245 aa).

It belongs to the HY2 family.

The enzyme catalyses (2R,3Z)-phycocyanobilin + 4 oxidized [2Fe-2S]-[ferredoxin] = biliverdin IXalpha + 4 reduced [2Fe-2S]-[ferredoxin] + 4 H(+). In terms of biological role, catalyzes the four-electron reduction of biliverdin IX-alpha (2-electron reduction at both the A and D rings); the reaction proceeds via an isolatable 2-electron intermediate, 181,182-dihydrobiliverdin. The protein is Phycocyanobilin:ferredoxin oxidoreductase of Rippkaea orientalis (strain PCC 8801 / RF-1) (Cyanothece sp. (strain PCC 8801)).